A 262-amino-acid chain; its full sequence is Ribosome-recycling factor, mitochondrial (262 aa).

The transit peptide at 1–55 (MALGIRCFRLLHPAFSSYLADLSRPVSEVPMKTVRGRQRDHIQYSAHPAVPVRQF) directs the protein to the mitochondrion.

It belongs to the RRF family.

Its subcellular location is the mitochondrion. Its function is as follows. Responsible for the disassembly of ribosomes from messenger RNA at the termination of mitochondrial protein biosynthesis. Acts in collaboration with GFM2. Promotes mitochondrial ribosome recycling by dissolution of intersubunit contacts. The polypeptide is Ribosome-recycling factor, mitochondrial (Mrrf) (Rattus norvegicus (Rat)).